A 399-amino-acid polypeptide reads, in one-letter code: Cell division protein FtsZ (399 aa).

GTP-binding positions include 18–22 (GGGVN), 105–107 (GTG), Glu-136, Arg-140, and Asp-184. Residues 311 to 399 (GFDGGQPPSK…EELDVPDFLK (89 aa)) are disordered. Acidic residues predominate over residues 388–399 (AAEELDVPDFLK).

It belongs to the FtsZ family. As to quaternary structure, homodimer. Polymerizes to form a dynamic ring structure in a strictly GTP-dependent manner. Interacts directly with several other division proteins.

The protein localises to the cytoplasm. In terms of biological role, essential cell division protein that forms a contractile ring structure (Z ring) at the future cell division site. The regulation of the ring assembly controls the timing and the location of cell division. One of the functions of the FtsZ ring is to recruit other cell division proteins to the septum to produce a new cell wall between the dividing cells. Binds GTP and shows GTPase activity. The chain is Cell division protein FtsZ from Streptomyces coelicolor (strain ATCC BAA-471 / A3(2) / M145).